The primary structure comprises 369 residues: Immunoglobulin superfamily member 5 (369 aa).

Residues 1–24 (MEGSWRDVLAVLVILAQLTVSGSS) form the signal peptide. 2 consecutive Ig-like V-type domains span residues 25–125 (YQII…LSVQ) and 128–217 (GTLN…LTVN). Over 25–239 (YQIIEGPRNV…GEGQALPTWA (215 aa)) the chain is Extracellular. Asn33 and Asn45 each carry an N-linked (GlcNAc...) asparagine glycan. An intrachain disulfide couples Cys46 to Cys109. Residues Asn146, Asn196, and Asn217 are each glycosylated (N-linked (GlcNAc...) asparagine). Cysteines 149 and 201 form a disulfide. A helical membrane pass occupies residues 240–260 (IILLAVAFSLLLILIIALIII). Topologically, residues 261-369 (FCCCCVSRRE…PQKIRNVTIV (109 aa)) are cytoplasmic. A disordered region spans residues 321 to 354 (PKSGEVSLPEQRSSLPQQELDKHRPSPVTHPRVS).

This sequence belongs to the immunoglobulin superfamily. As to quaternary structure, interacts with MAGI1 at tight junctions, forms a tripartite complex with NPHS1. Interacts with LNX1 isoform 2 via its PDZ 2 domain, it may also interact with other isoforms containing this domain. In kidney, it is found in glomeruli and in the proximal tubules (at protein level).

Its subcellular location is the apical cell membrane. The protein resides in the cell junction. It is found in the tight junction. Functionally, provides, together with MAGI1, an adhesion machinery at tight junctions, which may regulate the permeability of kidney glomerulus and small intestinal epithelial cells. Mediates calcium-independent homophilic cell adhesion. In testis, it may function as a cell adhesion molecule rather than a tight-junction protein. It may participate in the adhesion between spermatogonia-spermatogonia, spermatogonia-Sertoli cells, and Sertoli cells-Sertoli cells. This chain is Immunoglobulin superfamily member 5 (Igsf5), found in Rattus norvegicus (Rat).